Consider the following 460-residue polypeptide: tRNA (guanine(10)-N(2))-methyltransferase TRMT11 (460 aa).

A2 is modified (N-acetylalanine).

Belongs to the class I-like SAM-binding methyltransferase superfamily. TRM11 methyltransferase family. As to quaternary structure, part of the heterodimeric TRMT11-TRM112 methyltransferase complex; this complex forms an active tRNA methyltransferase, where TRMT112 acts as an activator of the catalytic subunit TRMT11.

It is found in the cytoplasm. It catalyses the reaction guanosine(10) in tRNA + S-adenosyl-L-methionine = N(2)-methylguanosine(10) in tRNA + S-adenosyl-L-homocysteine + H(+). Catalytic subunit of the TRMT11-TRM112 methyltransferase complex, that specifically mediates the S-adenosyl-L-methionine-dependent N(2)-methylation of guanosine nucleotide at position 10 (m2G10) in tRNAs. This is one of the major tRNA (guanine-N(2))-methyltransferases. The protein is tRNA (guanine(10)-N(2))-methyltransferase TRMT11 of Mus musculus (Mouse).